A 338-amino-acid chain; its full sequence is D-erythrose-4-phosphate dehydrogenase (338 aa).

Residue 11–12 (RI) coordinates NAD(+). Substrate-binding positions include 153 to 155 (SCT), arginine 199, 212 to 213 (TK), and arginine 235. Cysteine 154 serves as the catalytic Nucleophile. Asparagine 317 provides a ligand contact to NAD(+).

The protein belongs to the glyceraldehyde-3-phosphate dehydrogenase family. Epd subfamily. Homotetramer.

Its subcellular location is the cytoplasm. The catalysed reaction is D-erythrose 4-phosphate + NAD(+) + H2O = 4-phospho-D-erythronate + NADH + 2 H(+). The protein operates within cofactor biosynthesis; pyridoxine 5'-phosphate biosynthesis; pyridoxine 5'-phosphate from D-erythrose 4-phosphate: step 1/5. In terms of biological role, catalyzes the NAD-dependent conversion of D-erythrose 4-phosphate to 4-phosphoerythronate. This Shewanella baltica (strain OS223) protein is D-erythrose-4-phosphate dehydrogenase.